The following is a 73-amino-acid chain: V-type proton ATPase subunit e (73 aa).

Residues 1 to 3 are Lumenal-facing; it reads MSS. A helical transmembrane segment spans residues 4–24; the sequence is FYTVVGVFIVVSAMSVLFWIM. Topologically, residues 25–35 are cytoplasmic; it reads APKNNQAVWRS. Residues 36 to 56 traverse the membrane as a helical segment; the sequence is TVILTLAMMFLMWAITFLCQL. At 57–73 the chain is on the lumenal side; that stretch reads HPLVAPRRSDLRPEFAE.

It belongs to the V-ATPase e1/e2 subunit family. In terms of assembly, V-ATPase is a heteromultimeric enzyme composed of a peripheral catalytic V1 complex (components A to H) attached to an integral membrane V0 proton pore complex (components: a, c, c', c'', d, e, f and VOA1).

It is found in the vacuole membrane. Functionally, subunit of the V0 complex of vacuolar(H+)-ATPase (V-ATPase), a multisubunit enzyme composed of a peripheral complex (V1) that hydrolyzes ATP and a membrane integral complex (V0) that translocates protons. V-ATPase is responsible for acidifying and maintaining the pH of intracellular compartments. The sequence is that of V-type proton ATPase subunit e (VMA9) from Saccharomyces cerevisiae (strain ATCC 204508 / S288c) (Baker's yeast).